We begin with the raw amino-acid sequence, 544 residues long: D-2-hydroxyglutarate dehydrogenase, mitochondrial (544 aa).

The transit peptide at 1–10 (MMMPRLVPRW) directs the protein to the mitochondrion. Residues 119–298 (VRGSSKVLLR…TAVSILCPPK (180 aa)) enclose the FAD-binding PCMH-type domain. K124 bears the N6-succinyllysine mark. Residues R409, T413, and K424 each contribute to the (R)-2-hydroxyglutarate site. R409 serves as a coordination point for (R)-lactate. (R)-malate contacts are provided by R409, T413, and K424. The Zn(2+) site is built by H457 and H464. N466 is a binding site for (R)-2-hydroxyglutarate. E498 is a binding site for Zn(2+). H499 contacts (R)-2-hydroxyglutarate. Residue H499 coordinates (R)-lactate. Position 499 (H499) interacts with (R)-malate.

This sequence belongs to the FAD-binding oxidoreductase/transferase type 4 family. It depends on FAD as a cofactor.

The protein resides in the mitochondrion. The catalysed reaction is (R)-2-hydroxyglutarate + A = 2-oxoglutarate + AH2. The enzyme catalyses (R)-malate + A = oxaloacetate + AH2. Activated by zinc and cobalt ions. Catalyzes the oxidation of D-2-hydroxyglutarate (D-2-HG) to alpha-ketoglutarate. Also catalyzes the oxidation of other D-2-hydroxyacids, such as D-malate (D-MAL) and D-lactate (D-LAC). Exhibits high activities towards D-2-HG and D-MAL but a very weak activity towards D-LAC. The sequence is that of D-2-hydroxyglutarate dehydrogenase, mitochondrial (D2HGDH) from Bos taurus (Bovine).